Here is a 360-residue protein sequence, read N- to C-terminus: Peptide chain release factor 1 (360 aa).

Q235 is modified (N5-methylglutamine). A disordered region spans residues 284 to 303 (RERQSKEAAERKSLVGSGDR).

Belongs to the prokaryotic/mitochondrial release factor family. In terms of processing, methylated by PrmC. Methylation increases the termination efficiency of RF1.

The protein resides in the cytoplasm. Peptide chain release factor 1 directs the termination of translation in response to the peptide chain termination codons UAG and UAA. The protein is Peptide chain release factor 1 of Bordetella avium (strain 197N).